The primary structure comprises 371 residues: MSQWGSGAILVQPDSLGRGYDGDWHTAVATRGGGVVQLNLVNRRAVAFMPKVSGDSGWAVGRVSLDLRMAMPADFCAIIHAPALASPGHHVILGLIDSGYRGTVMAVVVAPKRTREFAPGTLRVDVTFLDILATPPALTEPISLRQFPQLAPPPPTGAGIREDPWLEGALGAPSVTTALPARRRGRSLVYAGELTPVQTEHGDGVREAIAFLPKREEDAGFDIVVRRPVTVPANGTTVVQPSLRMLHADAGPAACYVLGRSSLNARGLLVVPTRWLPGHVCAFVVYNLTGVPVTLEAGAKVAQLLVAGADALPWIPPDNFHGTKALRNYPRGVPDSTAEPRNPPLLVFTNEFDAEAPPSERGTGGFGSTGI.

Residues 260–262 and 366–367 each bind substrate; these read RSS and FG. Positions 350-371 are disordered; that stretch reads NEFDAEAPPSERGTGGFGSTGI. Residues 362 to 371 are compositionally biased toward gly residues; sequence GTGGFGSTGI.

This sequence belongs to the dUTPase family. The cofactor is Mg(2+).

It carries out the reaction dUTP + H2O = dUMP + diphosphate + H(+). Involved in nucleotide metabolism: produces dUMP, the immediate precursor of thymidine nucleotides and decreases the intracellular concentration of dUTP to avoid uracil incorporation into viral DNA. In Homo sapiens (Human), this protein is Deoxyuridine 5'-triphosphate nucleotidohydrolase.